The following is a 467-amino-acid chain: Glycogen synthase (467 aa).

Lysine 16 is a binding site for ADP-alpha-D-glucose.

Belongs to the glycosyltransferase 1 family. Bacterial/plant glycogen synthase subfamily.

It catalyses the reaction [(1-&gt;4)-alpha-D-glucosyl](n) + ADP-alpha-D-glucose = [(1-&gt;4)-alpha-D-glucosyl](n+1) + ADP + H(+). The protein operates within glycan biosynthesis; glycogen biosynthesis. Synthesizes alpha-1,4-glucan chains using ADP-glucose. This is Glycogen synthase from Paracoccus denitrificans (strain Pd 1222).